The primary structure comprises 218 residues: MSFLDSYRKKTLMPSTDEALPGRAQPIPTSATHFVNSRPLKEPWPEGYKQVLFGMGCFWGAERLFWQVPGVYVTAVGYAGGVTPNPTYEETCTGLTGHAEVVLVVYDPKVVSLDELLTLFWEEHDPTQGMRQGNDIGTTYRSVIYTFDKADRDVAEKSREAYSQALAGRGLGPITTEIEDAPELYYAEDYHQQYLAKNPNGYCGLRGTGVSCPIPLAQ.

C57 is a catalytic residue.

The protein belongs to the MsrA Met sulfoxide reductase family.

It carries out the reaction L-methionyl-[protein] + [thioredoxin]-disulfide + H2O = L-methionyl-(S)-S-oxide-[protein] + [thioredoxin]-dithiol. The enzyme catalyses [thioredoxin]-disulfide + L-methionine + H2O = L-methionine (S)-S-oxide + [thioredoxin]-dithiol. Has an important function as a repair enzyme for proteins that have been inactivated by oxidation. Catalyzes the reversible oxidation-reduction of methionine sulfoxide in proteins to methionine. The chain is Peptide methionine sulfoxide reductase MsrA from Brucella anthropi (Ochrobactrum anthropi).